The primary structure comprises 360 residues: Aspartate beta-hydroxylase domain-containing protein 1 (360 aa).

Residues 1–45 (MWKGGNQEAVIEGSGGELGVPGSWGLQDAACHLARASLPIMFPWP) lie on the Cytoplasmic side of the membrane. The chain crosses the membrane as a helical span at residues 46–68 (LPLGSSALTMLLGALTSLFLWYC). Topologically, residues 69-360 (YRLGSQDMQA…ALDFVFAPDP (292 aa)) are lumenal.

This sequence belongs to the aspartyl/asparaginyl beta-hydroxylase family.

The protein resides in the membrane. This chain is Aspartate beta-hydroxylase domain-containing protein 1 (Asphd1), found in Mus musculus (Mouse).